Here is a 198-residue protein sequence, read N- to C-terminus: Protein hunchback (198 aa).

Disordered stretches follow at residues 16–117 and 152–198; these read SHHH…PMQS and NDKL…KYMA. Over residues 17–31 the composition is skewed to basic residues; it reads HHHHHHHAHHSHHQH. Composition is skewed to low complexity over residues 35-46 and 68-83; these read SNSNSNASSPHQ and QQQQQQQQQQQQQQQQ. The segment covering 95–105 has biased composition (polar residues); it reads PSPSNNDQNSP. The segment covering 179-198 has biased composition (basic and acidic residues); it reads EPEKEHDLMSNSSEDMKYMA.

Belongs to the hunchback C2H2-type zinc-finger protein family.

The protein localises to the nucleus. Gap class segmentation protein that controls development of head structures. In Drosophila disjuncta (Fruit fly), this protein is Protein hunchback (hb).